An 842-amino-acid chain; its full sequence is Histidine biosynthesis trifunctional protein (842 aa).

The phosphoribosyl-AMP cyclohydrolase stretch occupies residues 1-275 (MTFPLLPAYA…FVVEQTGVGF (275 aa)). The phosphoribosyl-ATP pyrophosphohydrolase stretch occupies residues 276–357 (CHLERTSCFG…FYFALVRCAK (82 aa)). Residues 358-842 (YGVTLDEVER…KVRMEKLGLI (485 aa)) are histidinol dehydrogenase. Residues 380–403 (KGDAKPGYTKEQPKEESKPKEVPS) form a disordered region. Residues 390 to 403 (EQPKEESKPKEVPS) are compositionally biased toward basic and acidic residues. Positions 667 and 670 each coordinate Zn(2+). Catalysis depends on residues Glu-736 and His-737. Positions 769 and 828 each coordinate Zn(2+).

In the C-terminal section; belongs to the histidinol dehydrogenase family. Zn(2+) is required as a cofactor.

The catalysed reaction is 1-(5-phospho-beta-D-ribosyl)-5'-AMP + H2O = 1-(5-phospho-beta-D-ribosyl)-5-[(5-phospho-beta-D-ribosylamino)methylideneamino]imidazole-4-carboxamide. It carries out the reaction 1-(5-phospho-beta-D-ribosyl)-ATP + H2O = 1-(5-phospho-beta-D-ribosyl)-5'-AMP + diphosphate + H(+). It catalyses the reaction L-histidinol + 2 NAD(+) + H2O = L-histidine + 2 NADH + 3 H(+). The protein operates within amino-acid biosynthesis; L-histidine biosynthesis; L-histidine from 5-phospho-alpha-D-ribose 1-diphosphate: step 2/9. Its pathway is amino-acid biosynthesis; L-histidine biosynthesis; L-histidine from 5-phospho-alpha-D-ribose 1-diphosphate: step 3/9. It participates in amino-acid biosynthesis; L-histidine biosynthesis; L-histidine from 5-phospho-alpha-D-ribose 1-diphosphate: step 9/9. In Komagataella pastoris (Yeast), this protein is Histidine biosynthesis trifunctional protein (HIS4).